A 192-amino-acid polypeptide reads, in one-letter code: T-cell surface glycoprotein CD3 epsilon chain (192 aa).

An N-terminal signal peptide occupies residues 1 to 21 (MQTGNLWQVLGLCLLLVGAWA). Over 22-111 (QDDTEQNPYE…RVCKNCMEVN (90 aa)) the chain is Extracellular. Positions 27–98 (QNPYEVSISG…GNTEAAHTLY (72 aa)) constitute an Ig-like domain. Cys43 and Cys84 form a disulfide bridge. The helical transmembrane segment at 112–137 (LLEVATIIVVDICVTLGLLLLVYYWS) threads the bilayer. At 138–192 (KSRKAKATPMTRGAGAGGRPRGQNRERPPPVPNPDYEPIRKGQRDLYSGLNQRGV) the chain is on the cytoplasmic side. Positions 146-192 (PMTRGAGAGGRPRGQNRERPPPVPNPDYEPIRKGQRDLYSGLNQRGV) are disordered. Residues 160-177 (QNRERPPPVPNPDYEPIR) are NUMB-binding region. Positions 163–190 (ERPPPVPNPDYEPIRKGQRDLYSGLNQR) constitute an ITAM domain. A proline-rich sequence region spans residues 164–171 (RPPPVPNP). Tyr173 and Tyr184 each carry phosphotyrosine.

In terms of assembly, the TCR-CD3 complex is composed of a CD3D/CD3E and a CD3G/CD3E heterodimers that preferentially associate with TCRalpha and TCRbeta, respectively, to form TCRalpha/CD3E/CD3G and TCRbeta/CD3G/CD3E trimers. In turn, the hexamer interacts with CD3Z homodimer to form the TCR-CD3 complex. Alternatively, TCRalpha and TCRbeta can be replaced by TCRgamma and TCRdelta. Interacts with CD6. Interacts (via Proline-rich sequence) with NCK1; the interaction is ligand dependent but independent of tyrosine kinase activation. Post-translationally, phosphorylated on Tyr residues after T-cell receptor triggering by LCK in association with CD4/CD8.

The protein localises to the cell membrane. Functionally, part of the TCR-CD3 complex present on T-lymphocyte cell surface that plays an essential role in adaptive immune response. When antigen presenting cells (APCs) activate T-cell receptor (TCR), TCR-mediated signals are transmitted across the cell membrane by the CD3 chains CD3D, CD3E, CD3G and CD3Z. All CD3 chains contain immunoreceptor tyrosine-based activation motifs (ITAMs) in their cytoplasmic domain. Upon TCR engagement, these motifs become phosphorylated by Src family protein tyrosine kinases LCK and FYN, resulting in the activation of downstream signaling pathways. In addition of this role of signal transduction in T-cell activation, CD3E plays an essential role in correct T-cell development. Also participates in internalization and cell surface down-regulation of TCR-CD3 complexes via endocytosis sequences present in CD3E cytosolic region. In addition to its role as a TCR coreceptor, it serves as a receptor for ITPRIPL1. Ligand recognition inhibits T-cell activation by promoting interaction with NCK1, which prevents CD3E-ZAP70 interaction and blocks the ERK-NFkB signaling cascade and calcium influx. The protein is T-cell surface glycoprotein CD3 epsilon chain (CD3E) of Ovis aries (Sheep).